Consider the following 348-residue polypeptide: Phenylalanine--tRNA ligase alpha subunit (348 aa).

Position 259 (E259) interacts with Mg(2+).

It belongs to the class-II aminoacyl-tRNA synthetase family. Phe-tRNA synthetase alpha subunit type 1 subfamily. As to quaternary structure, tetramer of two alpha and two beta subunits. Mg(2+) serves as cofactor.

It localises to the cytoplasm. The enzyme catalyses tRNA(Phe) + L-phenylalanine + ATP = L-phenylalanyl-tRNA(Phe) + AMP + diphosphate + H(+). In Enterococcus faecalis (strain ATCC 700802 / V583), this protein is Phenylalanine--tRNA ligase alpha subunit.